Here is a 2530-residue protein sequence, read N- to C-terminus: Cullin-9 (2530 aa).

Lys-87 is covalently cross-linked (Glycyl lysine isopeptide (Lys-Gly) (interchain with G-Cter in ubiquitin)). A CPH domain is found at 367–440; that stretch reads RSEFSSRSGY…HWHMLEILGP (74 aa). 2 disordered regions span residues 585–639 and 930–951; these read LPSS…KAQS and RGSP…GSPE. Polar residues predominate over residues 940-949; the sequence is TPSTQGQDGS. Residue Ser-978 is modified to Phosphoserine. Residues 1145–1324 enclose the DOC domain; that stretch reads PITIPFFDVF…RTCLFYTIRA (180 aa). 1365–1372 contacts ATP; the sequence is AAQALGKT. Disordered regions lie at residues 1435 to 1468 and 1667 to 1690; these read EAPP…TPVC and GDQE…GREL. Position 1459 is a phosphoserine (Ser-1459). Lys-1884 participates in a covalent cross-link: Glycyl lysine isopeptide (Lys-Gly) (interchain with G-Cter in NEDD8). The tract at residues 2070 to 2287 is TRIAD supradomain; that stretch reads RPDQCPVCVT…KDYYNCSAMV (218 aa). Zn(2+) is bound by residues Cys-2074, Cys-2077, Cys-2092, His-2094, Cys-2097, Cys-2100, Cys-2119, Cys-2124, Cys-2164, Cys-2170, Cys-2185, Cys-2188, Cys-2193, Cys-2196, His-2202, Cys-2207, Cys-2240, and Cys-2243. The RING-type 1 zinc-finger motif lies at 2074-2124; it reads CPVCVTPLGPHDDSPSLCCLHCCCKSCWNEYLTTRIEQNFVLNCTCPIADC. The segment at 2144–2207 adopts an IBR-type zinc-finger fold; sequence SKYEKALLRG…FPEAHYPASC (64 aa). The segment at 2240 to 2269 adopts an RING-type 2; atypical zinc-finger fold; the sequence is CPSCQAPIEKNEGCLHMTCARCNHGFCWRC. The active site involves Cys-2253. Residues Cys-2258, Cys-2261, Cys-2266, Cys-2269, His-2277, and Cys-2283 each contribute to the Zn(2+) site. Ser-2440 carries the post-translational modification Phosphoserine. The segment at 2443–2530 is disordered; that stretch reads VETREVKGSN…DEDEDDESYD (88 aa). Positions 2452–2462 are enriched in polar residues; sequence NVPSDQPQGSS. A coiled-coil region spans residues 2459 to 2500; that stretch reads QGSSGLEVEDEEEEEEEEEEEEEEEEEDVPEWQHEFDEELDN. 2 stretches are compositionally biased toward acidic residues: residues 2465–2510 and 2520–2530; these read EVED…EESE and GDEDEDDESYD.

Belongs to the cullin family. Component of a Cul9-RING complex consisting of CUL9 and RBX1; the CUL9-RBX1 complex is a heterododecamer composed of six CUL9 and six RBX1 protomers. Interacts (via C-terminal TRIAD/RBR supradomain) with E2 ubiquitin-conjugating enzyme UBE2L3. Interacts with CUL7; the interaction with the CUL7 component of the 3M complex leads to inhibition of CUL9 activity. The CUL7-CUL9 heterodimer seems to interact specifically with TP53, likely via the CPH domain. Forms a complex with p53/TP53 in the cytoplasm of unstressed cells. Interacts with UBCH7 and UBCH8. Post-translationally, autoubiquitinated by the CUL9-RBX1 complex at Lys-87. In terms of processing, neddylated. Neddylation is mediated by E1 enzyme UBA3-NAE1 complex and E2 enzyme UBE2F. Structural rearrangment of the C-terminal TRIAD/RBR supradomain may play a role in neddylation and deneddylation.

The protein localises to the cytoplasm. In terms of biological role, core component of the Cul9-RING ubiquitin-protein ligase complex composed of CUL9 and RBX1. The CUL9-RBX1 complex mediates ubiquitination and subsequent degradation of BIRC5 and is required to maintain microtubule dynamics and genome integrity. Acts downstream of the 3M complex, which inhibits CUL9 activity and the ubiquitination of BIRC5. The CUL9-RBX1 complex also mediates mono-ubiquitination of p53/TP53. Acts as a cytoplasmic anchor protein in p53/TP53-associated protein complex. Regulates the subcellular localization of p53/TP53 and its subsequent function. Ubiquitinates apurinic/apyrimidinic endodeoxyribonuclease APEX2. Ubiquitination by the CUL9-RBX1 complex is predominantly mediated by E2 ubiquitin-conjugating enzymes UBE2L3 and UBE2D2. The chain is Cullin-9 (Cul9) from Mus musculus (Mouse).